Here is a 612-residue protein sequence, read N- to C-terminus: Dihydroxy-acid dehydratase (612 aa).

Aspartate 81 lines the Mg(2+) pocket. Cysteine 122 contacts [2Fe-2S] cluster. 2 residues coordinate Mg(2+): aspartate 123 and lysine 124. Lysine 124 carries the post-translational modification N6-carboxylysine. Residue cysteine 195 participates in [2Fe-2S] cluster binding. Residue glutamate 492 coordinates Mg(2+). Residue serine 518 is the Proton acceptor of the active site.

The protein belongs to the IlvD/Edd family. As to quaternary structure, homodimer. The cofactor is [2Fe-2S] cluster. It depends on Mg(2+) as a cofactor.

The enzyme catalyses (2R)-2,3-dihydroxy-3-methylbutanoate = 3-methyl-2-oxobutanoate + H2O. It carries out the reaction (2R,3R)-2,3-dihydroxy-3-methylpentanoate = (S)-3-methyl-2-oxopentanoate + H2O. It functions in the pathway amino-acid biosynthesis; L-isoleucine biosynthesis; L-isoleucine from 2-oxobutanoate: step 3/4. It participates in amino-acid biosynthesis; L-valine biosynthesis; L-valine from pyruvate: step 3/4. Its function is as follows. Functions in the biosynthesis of branched-chain amino acids. Catalyzes the dehydration of (2R,3R)-2,3-dihydroxy-3-methylpentanoate (2,3-dihydroxy-3-methylvalerate) into 2-oxo-3-methylpentanoate (2-oxo-3-methylvalerate) and of (2R)-2,3-dihydroxy-3-methylbutanoate (2,3-dihydroxyisovalerate) into 2-oxo-3-methylbutanoate (2-oxoisovalerate), the penultimate precursor to L-isoleucine and L-valine, respectively. In Kocuria rhizophila (strain ATCC 9341 / DSM 348 / NBRC 103217 / DC2201), this protein is Dihydroxy-acid dehydratase.